Consider the following 94-residue polypeptide: Small ribosomal subunit protein bS6 (94 aa).

The protein belongs to the bacterial ribosomal protein bS6 family.

Functionally, binds together with bS18 to 16S ribosomal RNA. This Alkaliphilus oremlandii (strain OhILAs) (Clostridium oremlandii (strain OhILAs)) protein is Small ribosomal subunit protein bS6.